A 478-amino-acid polypeptide reads, in one-letter code: Cysteine protease ATG4B (478 aa).

Over residues 1–15 (MTSLPDRGVSSSSSD) the composition is skewed to polar residues. Residues 1–31 (MTSLPDRGVSSSSSDPLCEGNIAPCSSSSEQ) form a disordered region. Catalysis depends on Cys164, which acts as the Nucleophile. Residues Asp361 and His363 contribute to the active site.

Belongs to the peptidase C54 family. Interacts with ATG8.

The protein resides in the cytoplasm. It catalyses the reaction [protein]-C-terminal L-amino acid-glycyl-phosphatidylethanolamide + H2O = [protein]-C-terminal L-amino acid-glycine + a 1,2-diacyl-sn-glycero-3-phosphoethanolamine. Functionally, cysteine protease that plays a key role in autophagy by mediating both proteolytic activation and delipidation of ATG8 family proteins. The protease activity is required for proteolytic activation of ATG8 family proteins: cleaves the C-terminal amino acid of ATG8 proteins to reveal a C-terminal glycine. Exposure of the glycine at the C-terminus is essential for ATG8 proteins conjugation to phosphatidylethanolamine (PE) and insertion to membranes, which is necessary for autophagy. In addition to the protease activity, also mediates delipidation of PE-conjugated ATG8 proteins. This chain is Cysteine protease ATG4B (ATG4B), found in Oryza sativa subsp. japonica (Rice).